We begin with the raw amino-acid sequence, 331 residues long: Type 2 lactosamine alpha-2,3-sialyltransferase (331 aa).

Residues 1–4 (MRGY) lie on the Cytoplasmic side of the membrane. The chain crosses the membrane as a helical; Signal-anchor for type II membrane protein span at residues 5-25 (LVAIFLSAVFLYYVLHCILWG). Topologically, residues 26–331 (TNVYWVAPVE…KNLVINLTQD (306 aa)) are lumenal. N-linked (GlcNAc...) asparagine glycans are attached at residues Asn129, Asn181, Asn282, Asn295, Asn308, and Asn327.

Belongs to the glycosyltransferase 29 family.

The protein resides in the golgi apparatus membrane. It catalyses the reaction a neolactoside nLc4Cer(d18:1(4E)) + CMP-N-acetyl-beta-neuraminate = a neolactoside IV(3)-alpha-NeuAc-nLc4Cer(d18:1(4E)) + CMP + H(+). The enzyme catalyses a beta-D-galactosyl-(1-&gt;4)-N-acetyl-beta-D-glucosaminyl derivative + CMP-N-acetyl-beta-neuraminate = an N-acetyl-alpha-neuraminyl-(2-&gt;3)-beta-D-galactosyl-(1-&gt;4)-N-acetyl-beta-D-glucosaminyl derivative + CMP + H(+). It carries out the reaction a neolactoside nLc6Cer(d18:1(4E)) + CMP-N-acetyl-beta-neuraminate = a neolactoside VI(3)-alpha-NeuNAc-nLc6Cer(d18:1(4E)) + CMP + H(+). In terms of biological role, transfers the sialyl residue from CMP-N-acetyl-beta-neuraminate to the terminal galactose residue on sugar chains of glycoproteins and glycolipids. It's alpha-2,3-sialyltransferase activity is specific toward type II glycan chains (Galbeta1-4GlcNAc) on glycoproteins and glycolipids such as neolactosides nLc4Cer and nLc6Cer, whose sialyl-products serve as precursors for the Lewis X antigen. Critically involved in the synthesis of functional selectin ligands needed for neutrophil recruitment during inflammation and lymphocyte homing to the lymph nodes. The sequence is that of Type 2 lactosamine alpha-2,3-sialyltransferase (ST3GAL6) from Pan troglodytes (Chimpanzee).